We begin with the raw amino-acid sequence, 145 residues long: Probable low molecular weight protein-tyrosine-phosphatase EpsP (145 aa).

Cys-9 functions as the Nucleophile in the catalytic mechanism. Residue Arg-15 is part of the active site. Asp-114 acts as the Proton donor in catalysis.

Belongs to the low molecular weight phosphotyrosine protein phosphatase family.

It carries out the reaction O-phospho-L-tyrosyl-[protein] + H2O = L-tyrosyl-[protein] + phosphate. The protein operates within glycan metabolism; exopolysaccharide biosynthesis. May be involved in assembly or function of the EPS I polymerization/export complex and/or the EpsB ATPase. Alternatively it may function in the removal of the terminal phosphate from C55-isoprenyl pyrophosphate in order to recycle the C55-isoprenyl phosphate lipid carrier used in the synthesis of polysaccharide repeat units. The protein is Probable low molecular weight protein-tyrosine-phosphatase EpsP (epsP) of Ralstonia nicotianae (strain ATCC BAA-1114 / GMI1000) (Ralstonia solanacearum).